The primary structure comprises 185 residues: Ribosome-recycling factor (185 aa).

It belongs to the RRF family.

The protein resides in the cytoplasm. In terms of biological role, responsible for the release of ribosomes from messenger RNA at the termination of protein biosynthesis. May increase the efficiency of translation by recycling ribosomes from one round of translation to another. This chain is Ribosome-recycling factor, found in Arthrobacter sp. (strain FB24).